Consider the following 162-residue polypeptide: SsrA-binding protein (162 aa).

This sequence belongs to the SmpB family.

It is found in the cytoplasm. In terms of biological role, required for rescue of stalled ribosomes mediated by trans-translation. Binds to transfer-messenger RNA (tmRNA), required for stable association of tmRNA with ribosomes. tmRNA and SmpB together mimic tRNA shape, replacing the anticodon stem-loop with SmpB. tmRNA is encoded by the ssrA gene; the 2 termini fold to resemble tRNA(Ala) and it encodes a 'tag peptide', a short internal open reading frame. During trans-translation Ala-aminoacylated tmRNA acts like a tRNA, entering the A-site of stalled ribosomes, displacing the stalled mRNA. The ribosome then switches to translate the ORF on the tmRNA; the nascent peptide is terminated with the 'tag peptide' encoded by the tmRNA and targeted for degradation. The ribosome is freed to recommence translation, which seems to be the essential function of trans-translation. In Sorangium cellulosum (strain So ce56) (Polyangium cellulosum (strain So ce56)), this protein is SsrA-binding protein.